The sequence spans 245 residues: Phycocyanobilin:ferredoxin oxidoreductase (245 aa).

The protein belongs to the HY2 family.

The enzyme catalyses (2R,3Z)-phycocyanobilin + 4 oxidized [2Fe-2S]-[ferredoxin] = biliverdin IXalpha + 4 reduced [2Fe-2S]-[ferredoxin] + 4 H(+). In terms of biological role, catalyzes the four-electron reduction of biliverdin IX-alpha (2-electron reduction at both the A and D rings); the reaction proceeds via an isolatable 2-electron intermediate, 181,182-dihydrobiliverdin. In Trichormus variabilis (strain ATCC 29413 / PCC 7937) (Anabaena variabilis), this protein is Phycocyanobilin:ferredoxin oxidoreductase.